The primary structure comprises 172 residues: MLSLVLCFFVMFLLGVAVVVLSPSPYFSALGLVFVAVSGCFIVLYHGGTFLSLVLVLLYLGGMMVVFVYSAALAADPYPEVLGGRVIWFFVICVLCICFAGYMSFNDFFLDVSVACEGADYTGGIFGAEWLGVTTFYEVGLILVLAGWALLVCLFSVLVVVRGVNRGALRAV.

6 consecutive transmembrane segments (helical) span residues 1–21, 25–45, 48–68, 86–106, 108–128, and 141–161; these read MLSL…VVVL, PYFS…IVLY, GTFL…VVFV, VIWF…MSFN, FFLD…IFGA, and LILV…LVVV.

Belongs to the complex I subunit 6 family.

The protein resides in the mitochondrion membrane. It catalyses the reaction a ubiquinone + NADH + 5 H(+)(in) = a ubiquinol + NAD(+) + 4 H(+)(out). Its function is as follows. Core subunit of the mitochondrial membrane respiratory chain NADH dehydrogenase (Complex I) that is believed to belong to the minimal assembly required for catalysis. Complex I functions in the transfer of electrons from NADH to the respiratory chain. The immediate electron acceptor for the enzyme is believed to be ubiquinone. This is NADH-ubiquinone oxidoreductase chain 6 (MT-ND6) from Petromyzon marinus (Sea lamprey).